The chain runs to 630 residues: Mitochondrial Rho GTPase 1 (630 aa).

In terms of domain architecture, Miro 1 spans 1–168 (MKEVRVVICG…FYMCRACVIY (168 aa)). The Cytoplasmic portion of the chain corresponds to 1-598 (MKEVRVVICG…EEDSNKTNYQ (598 aa)). Residues 10-17 (GDQGVGKS), 57-61 (DTQSD), and 113-116 (NKSE) contribute to the GTP site. EF-hand domains follow at residues 184-219 (ATIH…CFSK) and 304-339 (KGYR…TPGL). Residues aspartate 197, asparagine 199, aspartate 201, glutamate 208, aspartate 317, aspartate 319, aspartate 321, and glutamate 328 each contribute to the Ca(2+) site. One can recognise a Miro 2 domain in the interval 419–579 (RNVFLCFVVG…FIQLAESAQY (161 aa)). GTP-binding positions include 428–435 (GSKSCGKT), 459–463 (EFQST), and 527–530 (TKAD). Residues 599-619 (LVAALTAFGALLLSVGGSLTW) traverse the membrane as a helical; Anchor for type IV membrane protein segment. Over 620–630 (KIIKHQYYSKK) the chain is Mitochondrial intermembrane.

The protein belongs to the mitochondrial Rho GTPase family.

Its subcellular location is the mitochondrion outer membrane. Functionally, mitochondrial GTPase involved in mitochondrial trafficking. Probably involved in control of anterograde transport of mitochondria and their subcellular distribution. In Schizosaccharomyces pombe (strain 972 / ATCC 24843) (Fission yeast), this protein is Mitochondrial Rho GTPase 1 (gem1).